A 1212-amino-acid chain; its full sequence is Myosin-1 (1212 aa).

The tract at residues 1-35 is disordered; the sequence is MGITRRGKDKAAAGQAVAGGASGGRARPKKATFET. Residues 41–715 enclose the Myosin motor domain; sequence VGVSDLTLLS…TLFALEHMRD (675 aa). ATP is bound at residue 134 to 141; that stretch reads GESGAGKT. Residues 405–487 form an actin-binding region; the sequence is SVGILDIYGF…PGVFSALKDA (83 aa). IQ domains follow at residues 719 to 739 and 740 to 765; these read HNMA…RAES and ATRI…HGHR. A TH1 domain is found at 773–962; the sequence is RRRMSILGSR…AVHTQQGEPP (190 aa). Disordered stretches follow at residues 947-1064 and 1115-1212; these read DFYK…APPA and PAAY…DDDW. Residues 954–966 are compositionally biased toward polar residues; it reads VHTQQGEPPNSVS. Low complexity-rich tracts occupy residues 987–998 and 1008–1052; these read RPGGPNGRPARG and PGGA…ASVR. The segment covering 1053 to 1062 has biased composition (pro residues); sequence APPPPPPAAP. The region spanning 1065–1124 is the SH3 domain; that stretch reads KAKIMAKVLYDFAGQKENEMSIKEGDLIEIVQKENNGWWLAKSGNQQAWVPAAYVEEQKQ. The segment covering 1125–1140 has biased composition (pro residues); that stretch reads APPPVAASRPPPPAPP. Positions 1171 to 1190 are enriched in polar residues; it reads MSLNGSDGSRSNTPTPSLGN.

The protein belongs to the TRAFAC class myosin-kinesin ATPase superfamily. Myosin family.

Its subcellular location is the cytoplasm. It is found in the cytoskeleton. It localises to the actin patch. Functionally, type-I myosin implicated in the organization of the actin cytoskeleton. Required for proper actin cytoskeleton polarization. At the cell cortex, assembles in patch-like structures together with proteins from the actin-polymerizing machinery and promotes actin assembly. Functions as actin nucleation-promoting factor (NPF) for the Arp2/3 complex. In Pyricularia oryzae (strain 70-15 / ATCC MYA-4617 / FGSC 8958) (Rice blast fungus), this protein is Myosin-1 (MYO1).